We begin with the raw amino-acid sequence, 261 residues long: Kallikrein 1-related peptidase b8 (261 aa).

The N-terminal stretch at 1-18 (MRFLILFLALSLGGIDAA) is a signal peptide. Residues 19 to 24 (PPLQSR) constitute a propeptide, activation peptide. The Peptidase S1 domain maps to 25–258 (VVGGFNCEKN…FNSWIKDTMT (234 aa)). Cystine bridges form between Cys-31/Cys-173, Cys-50/Cys-66, Cys-152/Cys-219, Cys-184/Cys-198, and Cys-209/Cys-234. His-65 (charge relay system) is an active-site residue. N-linked (GlcNAc...) asparagine glycosylation is present at Asn-102. Asp-120 functions as the Charge relay system in the catalytic mechanism. The active-site Charge relay system is Ser-213.

The protein belongs to the peptidase S1 family. Kallikrein subfamily.

The catalysed reaction is Preferential cleavage of Arg-|-Xaa bonds in small molecule substrates. Highly selective action to release kallidin (lysyl-bradykinin) from kininogen involves hydrolysis of Met-|-Xaa or Leu-|-Xaa.. Glandular kallikreins cleave Met-Lys and Arg-Ser bonds in kininogen to release Lys-bradykinin. This Mus musculus (Mouse) protein is Kallikrein 1-related peptidase b8 (Klk1b8).